A 274-amino-acid chain; its full sequence is ATP synthase subunit a (274 aa).

A run of 5 helical transmembrane segments spans residues 43-63, 103-123, 144-164, 223-243, and 245-265; these read TLNI…LYVF, VIAP…VMDL, VVPT…FVLI, LIFI…LSLP, and AIFH…LTIV.

It belongs to the ATPase A chain family. In terms of assembly, F-type ATPases have 2 components, CF(1) - the catalytic core - and CF(0) - the membrane proton channel. CF(1) has five subunits: alpha(3), beta(3), gamma(1), delta(1), epsilon(1). CF(0) has three main subunits: a(1), b(2) and c(9-12). The alpha and beta chains form an alternating ring which encloses part of the gamma chain. CF(1) is attached to CF(0) by a central stalk formed by the gamma and epsilon chains, while a peripheral stalk is formed by the delta and b chains.

It localises to the cell inner membrane. Key component of the proton channel; it plays a direct role in the translocation of protons across the membrane. This Photorhabdus laumondii subsp. laumondii (strain DSM 15139 / CIP 105565 / TT01) (Photorhabdus luminescens subsp. laumondii) protein is ATP synthase subunit a.